The following is a 181-amino-acid chain: ATP synthase subunit delta (181 aa).

Belongs to the ATPase delta chain family. In terms of assembly, F-type ATPases have 2 components, F(1) - the catalytic core - and F(0) - the membrane proton channel. F(1) has five subunits: alpha(3), beta(3), gamma(1), delta(1), epsilon(1). F(0) has three main subunits: a(1), b(2) and c(10-14). The alpha and beta chains form an alternating ring which encloses part of the gamma chain. F(1) is attached to F(0) by a central stalk formed by the gamma and epsilon chains, while a peripheral stalk is formed by the delta and b chains.

The protein localises to the cell membrane. F(1)F(0) ATP synthase produces ATP from ADP in the presence of a proton or sodium gradient. F-type ATPases consist of two structural domains, F(1) containing the extramembraneous catalytic core and F(0) containing the membrane proton channel, linked together by a central stalk and a peripheral stalk. During catalysis, ATP synthesis in the catalytic domain of F(1) is coupled via a rotary mechanism of the central stalk subunits to proton translocation. Functionally, this protein is part of the stalk that links CF(0) to CF(1). It either transmits conformational changes from CF(0) to CF(1) or is implicated in proton conduction. This is ATP synthase subunit delta from Clostridioides difficile (strain 630) (Peptoclostridium difficile).